Here is a 371-residue protein sequence, read N- to C-terminus: 2-aminoethylphosphonate--pyruvate transaminase (371 aa).

Lysine 198 carries the N6-(pyridoxal phosphate)lysine modification.

Belongs to the class-V pyridoxal-phosphate-dependent aminotransferase family. PhnW subfamily. Homodimer. It depends on pyridoxal 5'-phosphate as a cofactor.

The catalysed reaction is (2-aminoethyl)phosphonate + pyruvate = phosphonoacetaldehyde + L-alanine. In terms of biological role, involved in phosphonate degradation. This chain is 2-aminoethylphosphonate--pyruvate transaminase, found in Syntrophobacter fumaroxidans (strain DSM 10017 / MPOB).